We begin with the raw amino-acid sequence, 519 residues long: Serine/threonine-protein kinase RIO3 (519 aa).

A phosphoserine mark is found at Ser-8 and Ser-112. The tract at residues 121–159 (PYEDSDSSEDEVDWQDTRDDPYRPAKPVPTPKKGFIGKG) is disordered. A Phosphotyrosine modification is found at Tyr-122. Positions 124-134 (DSDSSEDEVDW) are enriched in acidic residues. Residues Ser-125, Ser-127, and Ser-128 each carry the phosphoserine modification. A Protein kinase domain is found at 251-519 (ETITGCISTG…DGDPPLLYDE (269 aa)). ATP is bound by residues 257–265 (ISTGKESVV) and Lys-290. Catalysis depends on Asp-406, which acts as the Proton acceptor.

This sequence belongs to the protein kinase superfamily. RIO-type Ser/Thr kinase family. As to quaternary structure, interacts with CASP10. Interacts with IRF3; RIOK3 probably mediates the interaction of TBK1 with IRF3. Associated with 40S pre-ribosomal particles. The cofactor is Mg(2+). Post-translationally, autophosphorylated (in vitro). In terms of tissue distribution, widely expressed.

Its subcellular location is the cytoplasm. The enzyme catalyses L-seryl-[protein] + ATP = O-phospho-L-seryl-[protein] + ADP + H(+). It carries out the reaction L-threonyl-[protein] + ATP = O-phospho-L-threonyl-[protein] + ADP + H(+). In terms of biological role, involved in regulation of type I interferon (IFN)-dependent immune response which plays a critical role in the innate immune response against DNA and RNA viruses. May act as an adapter protein essential for the recruitment of TBK1 to IRF3. Phosphorylates IFIH1 on 'Ser-828' interfering with IFIH1 filament assembly on long dsRNA and resulting in attenuated IFIH1-signaling. Can inhibit CASP10 isoform 7-mediated activation of the NF-kappaB signaling pathway. May play a role in the biogenesis of the 40S ribosomal subunit. Involved in the processing of 21S pre-rRNA to the mature 18S rRNA. This Homo sapiens (Human) protein is Serine/threonine-protein kinase RIO3 (RIOK3).